The chain runs to 216 residues: Thiopurine S-methyltransferase (216 aa).

The S-adenosyl-L-methionine site is built by Trp11, Leu46, Glu67, and Arg122.

The protein belongs to the class I-like SAM-binding methyltransferase superfamily. TPMT family.

Its subcellular location is the cytoplasm. The enzyme catalyses S-adenosyl-L-methionine + a thiopurine = S-adenosyl-L-homocysteine + a thiopurine S-methylether.. The sequence is that of Thiopurine S-methyltransferase from Vibrio campbellii (strain ATCC BAA-1116).